Consider the following 208-residue polypeptide: MTKGILGEKVGMTQIFTESGEFIPVTVIEATPNVVLQVKTVETDGYEAIQVGFDDKREVLSNKPAKGHVAKANTAPKRFIREFKNIEGLEVGAEITVDIFAAGDVVDVTGTSKGKGFQGVIKRHGQSRGPMAHGSRYHRRPGSMGPVSPNRVFKNKHLAGRMGGNRVTIQNLEIVQVIPEKNVILIKGNVPGAKKSLITIKSAVKAAK.

Residues 117–149 are disordered; sequence FQGVIKRHGQSRGPMAHGSRYHRRPGSMGPVSP.

This sequence belongs to the universal ribosomal protein uL3 family. Part of the 50S ribosomal subunit. Forms a cluster with proteins L14 and L19.

In terms of biological role, one of the primary rRNA binding proteins, it binds directly near the 3'-end of the 23S rRNA, where it nucleates assembly of the 50S subunit. This is Large ribosomal subunit protein uL3 from Streptococcus equi subsp. equi (strain 4047).